The following is a 699-amino-acid chain: Elongation factor G (699 aa).

One can recognise a tr-type G domain in the interval 10–292 (NRTRNIGIMA…AVIDYLPSPT (283 aa)). Residues 19 to 26 (AHIDAGKT), 90 to 94 (DTPGH), and 144 to 147 (NKMD) each bind GTP. A disordered region spans residues 292–312 (TDVPAIRGEEDDGSEGSRSAS).

Belongs to the TRAFAC class translation factor GTPase superfamily. Classic translation factor GTPase family. EF-G/EF-2 subfamily.

Its subcellular location is the cytoplasm. In terms of biological role, catalyzes the GTP-dependent ribosomal translocation step during translation elongation. During this step, the ribosome changes from the pre-translocational (PRE) to the post-translocational (POST) state as the newly formed A-site-bound peptidyl-tRNA and P-site-bound deacylated tRNA move to the P and E sites, respectively. Catalyzes the coordinated movement of the two tRNA molecules, the mRNA and conformational changes in the ribosome. This is Elongation factor G from Coxiella burnetii (strain RSA 331 / Henzerling II).